The primary structure comprises 331 residues: Anthranilate phosphoribosyltransferase (331 aa).

5-phospho-alpha-D-ribose 1-diphosphate-binding positions include Gly-79, 82-83 (GD), Ser-87, 89-92 (NIST), 107-115 (KHCNSSISG), and Ser-119. Gly-79 is a binding site for anthranilate. Ser-91 serves as a coordination point for Mg(2+). Asn-110 contributes to the anthranilate binding site. Arg-165 serves as a coordination point for anthranilate. Mg(2+)-binding residues include Asp-223 and Glu-224.

Belongs to the anthranilate phosphoribosyltransferase family. Homodimer. Mg(2+) is required as a cofactor.

It carries out the reaction N-(5-phospho-beta-D-ribosyl)anthranilate + diphosphate = 5-phospho-alpha-D-ribose 1-diphosphate + anthranilate. Its pathway is amino-acid biosynthesis; L-tryptophan biosynthesis; L-tryptophan from chorismate: step 2/5. Catalyzes the transfer of the phosphoribosyl group of 5-phosphorylribose-1-pyrophosphate (PRPP) to anthranilate to yield N-(5'-phosphoribosyl)-anthranilate (PRA). This Buchnera aphidicola subsp. Melaphis rhois protein is Anthranilate phosphoribosyltransferase.